Here is a 274-residue protein sequence, read N- to C-terminus: Octanoyltransferase LipM (274 aa).

In terms of domain architecture, BPL/LPL catalytic spans 31 to 245 (GEVPPTLRLY…GFAEALGARL (215 aa)). Catalysis depends on Cys-147, which acts as the Acyl-thioester intermediate.

This sequence belongs to the octanoyltransferase LipM family. In terms of assembly, monomer.

The enzyme catalyses octanoyl-[ACP] + L-lysyl-[protein] = N(6)-octanoyl-L-lysyl-[protein] + holo-[ACP] + H(+). Its pathway is protein modification; protein lipoylation via endogenous pathway; protein N(6)-(lipoyl)lysine from octanoyl-[acyl-carrier-protein]. Functionally, catalyzes the transfer of endogenously produced octanoic acid from octanoyl-acyl-carrier-protein onto the lipoyl domain of GcvH, an intermediate carrier during protein lipoylation. The chain is Octanoyltransferase LipM from Kyrpidia tusciae (strain DSM 2912 / NBRC 15312 / T2) (Bacillus tusciae).